The sequence spans 502 residues: Dipeptide and tripeptide permease A (502 aa).

Topologically, residues Met1–Arg35 are cytoplasmic. Residues Phe36 to Ser56 traverse the membrane as a helical segment. The Periplasmic portion of the chain corresponds to Glu57 to Ser60. Residues Ile61 to Leu81 form a helical membrane-spanning segment. The Cytoplasmic portion of the chain corresponds to Gly82–Arg90. A helical membrane pass occupies residues Val91–His111. A topological domain (periplasmic) is located at residue Asp112. Residues Ala113–Asn133 form a helical membrane-spanning segment. Over Pro134–Thr154 the chain is Cytoplasmic. Residues Met155–Ala175 traverse the membrane as a helical segment. Over Ala176–Gly179 the chain is Periplasmic. The chain crosses the membrane as a helical span at residues Trp180–Phe200. The Cytoplasmic portion of the chain corresponds to Cys201–His218. A helical transmembrane segment spans residues Ile219–Leu239. The Periplasmic portion of the chain corresponds to Leu240–Arg247. The chain crosses the membrane as a helical span at residues Ala248 to Met268. The Cytoplasmic portion of the chain corresponds to Gln269–Lys275. A helical transmembrane segment spans residues Met276–Met296. Residues Pro297–Gln321 are Periplasmic-facing. A helical membrane pass occupies residues Phe322–Asn342. Over Lys343 to Lys353 the chain is Cytoplasmic. A helical transmembrane segment spans residues Phe354–Phe374. Over Ala375 to Asn384 the chain is Periplasmic. A helical membrane pass occupies residues Trp385 to Leu405. At Ala406–Arg415 the chain is on the cytoplasmic side. The chain crosses the membrane as a helical span at residues Leu416–Gly436. Topologically, residues Lys437 to Arg460 are periplasmic. The chain crosses the membrane as a helical span at residues Val461 to Pro481. Residues Lys482–Ala502 lie on the Cytoplasmic side of the membrane.

This sequence belongs to the major facilitator superfamily. Proton-dependent oligopeptide transporter (POT/PTR) (TC 2.A.17) family. DtpA subfamily.

The protein localises to the cell inner membrane. Proton-dependent permease that transports di- and tripeptides. The protein is Dipeptide and tripeptide permease A of Enterobacter sp. (strain 638).